The sequence spans 2118 residues: Separin (2118 aa).

Ser1121 carries the post-translational modification Phosphoserine. A compositionally biased stretch (basic residues) spans 1309-1318 (KCSGRGRRRI). The disordered stretch occupies residues 1309 to 1352 (KCSGRGRRRIASVPPPLHNSSQKGLEEEGPPCTPKPPGRARQAG). Phosphoserine occurs at positions 1391 and 1394. The interval 1408-1428 (EEPKRRGTASRTRGQTRKGRS) is disordered. Position 1504 is a phosphoserine (Ser1504). The region spanning 1941–2036 (PQNTFYVLNP…SAALAVHGNL (96 aa)) is the Peptidase C50 domain. Residue Cys2025 is part of the active site.

As to quaternary structure, interacts with PTTG1. Interacts with RAD21. In terms of processing, autocleaves. This function, which is not essential for its protease activity, is unknown. Phosphorylated by CDK1. There is 8 Ser/Thr phosphorylation sites. Among them, only Ser-1121 phosphorylation is the major site, which conducts to the enzyme inactivation.

The protein resides in the cytoplasm. Its subcellular location is the nucleus. The enzyme catalyses All bonds known to be hydrolyzed by this endopeptidase have arginine in P1 and an acidic residue in P4. P6 is often occupied by an acidic residue or by a hydroxy-amino-acid residue, the phosphorylation of which enhances cleavage.. Regulated by at least two independent mechanisms. First, it is inactivated via its interaction with securin/PTTG1, which probably covers its active site. The association with PTTG1 is not only inhibitory, since PTTG1 is also required for activating it, the enzyme being inactive in cells in which PTTG1 is absent. PTTG1 degradation at anaphase, liberates it and triggers RAD21 cleavage. Second, phosphorylation at Ser-1121 inactivates it. The complete phosphorylation during mitosis, is removed when cells undergo anaphase. Activation of the enzyme at the metaphase-anaphase transition probably requires the removal of both securin and inhibitory phosphate. Caspase-like protease, which plays a central role in the chromosome segregation by cleaving the SCC1/RAD21 subunit of the cohesin complex at the onset of anaphase. During most of the cell cycle, it is inactivated by different mechanisms. This Mus musculus (Mouse) protein is Separin (Espl1).